The primary structure comprises 177 residues: Parathyroid hormone-related protein (177 aa).

A signal peptide spans 1–24; that stretch reads MQRRLVQQWSVAVFLLSYAVPSCG. Residues 25 to 34 constitute a propeptide that is removed on maturation; that stretch reads RSVEGLSRRL. The important for receptor binding stretch occupies residues 57 to 68; that stretch reads RFFLHHLIAEIH. Positions 74 to 177 are disordered; sequence ATSEVSPNSK…TSLELDSRRH (104 aa). The span at 76-90 shows a compositional bias: polar residues; sequence SEVSPNSKPSPNTKN. Residues 108–129 carry the Nuclear localization signal motif; the sequence is TNKVETYKEQPLKTPGKKKKGK. Positions 109–118 are enriched in basic and acidic residues; sequence NKVETYKEQP. The span at 122-132 shows a compositional bias: basic residues; that stretch reads PGKKKKGKPGK.

This sequence belongs to the parathyroid hormone family. Interacts with PTH1R (via N-terminal extracellular domain). There are 3 principal secretory forms, called PTHrP[1-36], PTHrP[38-94], and osteostatin (PTHrP[107-139]) arising from endoproteolytic cleavage of the initial translation product. Each of these secretory forms is believed to have one or more of its own receptors that mediates the normal paracrine, autocrine and endocrine actions. In terms of tissue distribution, ubiquitous. Also expressed in the mammary gland.

It is found in the secreted. Its subcellular location is the cytoplasm. It localises to the nucleus. In terms of biological role, neuroendocrine peptide which is a critical regulator of cellular and organ growth, development, migration, differentiation and survival and of epithelial calcium ion transport. Acts by binding to its receptor, PTH1R, activating G protein-coupled receptor signaling. Regulates endochondral bone development and epithelial-mesenchymal interactions during the formation of the mammary glands and teeth. Required for skeletal homeostasis. Promotes mammary mesenchyme differentiation and bud outgrowth by modulating mesenchymal cell responsiveness to BMPs. Up-regulates BMPR1A expression in the mammary mesenchyme and this increases the sensitivity of these cells to BMPs and allows them to respond to BMP4 in a paracrine and/or autocrine fashion. BMP4 signaling in the mesenchyme, in turn, triggers epithelial outgrowth and augments MSX2 expression, which causes the mammary mesenchyme to inhibit hair follicle formation within the nipple sheath. Promotes colon cancer cell migration and invasion in an integrin alpha-6/beta-1-dependent manner through activation of Rac1. Its function is as follows. Potent inhibitor of osteoclastic bone resorption. The polypeptide is Parathyroid hormone-related protein (Homo sapiens (Human)).